Here is a 190-residue protein sequence, read N- to C-terminus: GTP cyclohydrolase 1 (190 aa).

Zn(2+)-binding residues include cysteine 75, histidine 78, and cysteine 146.

Belongs to the GTP cyclohydrolase I family. In terms of assembly, homomer.

The catalysed reaction is GTP + H2O = 7,8-dihydroneopterin 3'-triphosphate + formate + H(+). It functions in the pathway cofactor biosynthesis; 7,8-dihydroneopterin triphosphate biosynthesis; 7,8-dihydroneopterin triphosphate from GTP: step 1/1. The chain is GTP cyclohydrolase 1 from Campylobacter concisus (strain 13826).